The sequence spans 164 residues: Phosphopantetheine adenylyltransferase (164 aa).

S9 is a substrate binding site. ATP is bound by residues 9 to 10 and H17; that span reads SF. Residues K41, L73, and K87 each coordinate substrate. ATP contacts are provided by residues 88–90, E98, and 123–129; these read GLR and YSYLSSS.

Belongs to the bacterial CoaD family. Homohexamer. Mg(2+) serves as cofactor.

It localises to the cytoplasm. The enzyme catalyses (R)-4'-phosphopantetheine + ATP + H(+) = 3'-dephospho-CoA + diphosphate. It functions in the pathway cofactor biosynthesis; coenzyme A biosynthesis; CoA from (R)-pantothenate: step 4/5. Functionally, reversibly transfers an adenylyl group from ATP to 4'-phosphopantetheine, yielding dephospho-CoA (dPCoA) and pyrophosphate. The polypeptide is Phosphopantetheine adenylyltransferase (Clostridium botulinum (strain Okra / Type B1)).